A 297-amino-acid polypeptide reads, in one-letter code: Aspartate carbamoyltransferase catalytic subunit (297 aa).

Residues Arg49 and Thr50 each coordinate carbamoyl phosphate. Lys77 is a binding site for L-aspartate. Residues Arg99, His129, and Gln132 each contribute to the carbamoyl phosphate site. Residues Arg162 and Arg215 each contribute to the L-aspartate site. Carbamoyl phosphate contacts are provided by Gly256 and Pro257.

This sequence belongs to the aspartate/ornithine carbamoyltransferase superfamily. ATCase family. Heterododecamer (2C3:3R2) of six catalytic PyrB chains organized as two trimers (C3), and six regulatory PyrI chains organized as three dimers (R2).

The catalysed reaction is carbamoyl phosphate + L-aspartate = N-carbamoyl-L-aspartate + phosphate + H(+). It functions in the pathway pyrimidine metabolism; UMP biosynthesis via de novo pathway; (S)-dihydroorotate from bicarbonate: step 2/3. Its function is as follows. Catalyzes the condensation of carbamoyl phosphate and aspartate to form carbamoyl aspartate and inorganic phosphate, the committed step in the de novo pyrimidine nucleotide biosynthesis pathway. The sequence is that of Aspartate carbamoyltransferase catalytic subunit from Legionella pneumophila (strain Corby).